Consider the following 182-residue polypeptide: Ribosome-recycling factor (182 aa).

This sequence belongs to the RRF family.

The protein resides in the cytoplasm. Functionally, responsible for the release of ribosomes from messenger RNA at the termination of protein biosynthesis. May increase the efficiency of translation by recycling ribosomes from one round of translation to another. The sequence is that of Ribosome-recycling factor from Prochlorococcus marinus (strain MIT 9313).